We begin with the raw amino-acid sequence, 457 residues long: Arginine biosynthesis bifunctional protein ArgJ, mitochondrial (457 aa).

Thr-184, Lys-213, Thr-224, Glu-312, Asn-452, and Thr-457 together coordinate substrate. The Nucleophile role is filled by Thr-224.

This sequence belongs to the ArgJ family. Heterodimer of an alpha and a beta chain. The alpha and beta chains are autoproteolytically processed from a single precursor protein within the mitochondrion.

It is found in the mitochondrion matrix. It catalyses the reaction N(2)-acetyl-L-ornithine + L-glutamate = N-acetyl-L-glutamate + L-ornithine. The catalysed reaction is L-glutamate + acetyl-CoA = N-acetyl-L-glutamate + CoA + H(+). It participates in amino-acid biosynthesis; L-arginine biosynthesis; L-ornithine and N-acetyl-L-glutamate from L-glutamate and N(2)-acetyl-L-ornithine (cyclic): step 1/1. The protein operates within amino-acid biosynthesis; L-arginine biosynthesis; N(2)-acetyl-L-ornithine from L-glutamate: step 1/4. Its function is as follows. Catalyzes two activities which are involved in the cyclic version of arginine biosynthesis: the synthesis of acetylglutamate from glutamate and acetyl-CoA, and of ornithine by transacetylation between acetylornithine and glutamate. In Aspergillus terreus (strain NIH 2624 / FGSC A1156), this protein is Arginine biosynthesis bifunctional protein ArgJ, mitochondrial.